A 765-amino-acid polypeptide reads, in one-letter code: MAKPRRNNKNKKGQSRSQAREKEEAELLKLQERIDQYDPAVDEKSISQFSDLPITQETLRGLNESSFMSLTDIQKKTIPIALKGEDLMGTARTGSGKTLAFLIPVVESLIRNKITEHDGLAALIVSPTRELAVQTFEVLTKIGKYNTFSAGLVTGGKDVQYEKERVSRMNILVGTPGRISQHLNEAVGMETSNLQVLVLDEADRCLDMGFKKQIDNIVGHLPPTRQTLLFSATVSDSVKDLARLSLTNPKRIGVSSDQDVSATPESLDQYYIRIPLDEKLDVLWSFIKSHLKSKILVFFSSSKQVQYAYETFRTLQPGISLLKLYGRHKQTSRLETTVKFTQAQYACLFATDIVARGLDFPAIDWVVQVDCPEDAVTYVHRVGRAARFGRQGKSLLMLLPSEEEGMLKRLENNKIEPKFMNIKQKSKKSIRPQLQSLCFKDPMIKNLGQRAFISYYKSVYIQKDKDVFKVEELPSEKYAASLGLPGAPKIKIKGGSSSKEKKNASRQLVALSKTNEDGESVENEASKVRTKYDRMFERKNQNVLSEHYLKLNGSQTKEDEDEEEEDDFMSVKRKDHELTEVELPDLTIPVSKRQAKKALSKKLSISTKGNPTKLKFDDEGVAHAIYELEDEEDFIKRGDAKEQKKAFVSRETEVMNEADEEDKIMAKEKRQEKKRKRKEVEKRMRDEELQSGDDEETVYTLGGDVDLERDMEYSTDEEEQPQNKKPKWFENDKHNRKNPVNHIVEIDEPETLEDLESLTARLLQH.

Over residues 1-14 (MAKPRRNNKNKKGQ) the composition is skewed to basic residues. A disordered region spans residues 1-24 (MAKPRRNNKNKKGQSRSQAREKEE). The short motif at 47–75 (SQFSDLPITQETLRGLNESSFMSLTDIQK) is the Q motif element. Positions 78-252 (IPIALKGEDL…RLSLTNPKRI (175 aa)) constitute a Helicase ATP-binding domain. Residue 91-98 (ARTGSGKT) participates in ATP binding. A DEAD box motif is present at residues 200–203 (DEAD). One can recognise a Helicase C-terminal domain in the interval 266–438 (SLDQYYIRIP…SIRPQLQSLC (173 aa)). 3 disordered regions span residues 493–526 (KGGSSSKEKKNASRQLVALSKTNEDGESVENEAS), 552–576 (NGSQTKEDEDEEEEDDFMSVKRKDH), and 641–735 (KEQK…DKHN). Over residues 558 to 568 (EDEDEEEEDDF) the composition is skewed to acidic residues. 2 stretches are compositionally biased toward basic and acidic residues: residues 641–653 (KEQKKAFVSRETE) and 678–688 (KEVEKRMRDEE).

It belongs to the DEAD box helicase family. DDX10/DBP4 subfamily. As to quaternary structure, interacts with the U3 and U14 snoRNAs. Associates with pre-ribosomal complexes.

It localises to the nucleus. It is found in the nucleolus. It catalyses the reaction ATP + H2O = ADP + phosphate + H(+). In terms of biological role, ATP-dependent RNA helicase required for ribosome biogenesis. Involved in the release of U14 snoRNA in pre-ribosomal complexes. Required for pre-rRNA cleavage at site A2. The protein is ATP-dependent RNA helicase DBP4 (DBP4) of Scheffersomyces stipitis (strain ATCC 58785 / CBS 6054 / NBRC 10063 / NRRL Y-11545) (Yeast).